The primary structure comprises 572 residues: MARHLITSAIPYINGIKHLGNLVGSQLPADLYARYLRGRDNEVMFICATDEHGTPAELAAAKAGKPIAVYCAEMHEVQAEIARNFGLSFDHFGRSSSERNHVLTQHFAGKLDENGYIAEVEERQVYSIDDGRFLPDRYIEGTCPNCGYDKARGDQCENCTKQLDPTDLIEPRSAISGSTNLEVRATKHLYLRQRSLKDRIAAWIDSKTDWPILTTSIARKWLNDGDGLQDRGITRDLDWGIPVKKGDKPWPGMEGKVFYVWFDAPIEYIAATAEGADKRGEPDSAWRRWWRLDEGAEDVTYTQFMGKDNVPFHTLSFPATIIGSGEPWKLVDYIKSFNYLTYDGGQFSTSQGRGVFMDQALSILPADYWRWWLLSHAPESGDSEFTWDNFQQSVNKDLADVLGNFVSRITKFCRSKFGETIPQGGSYGPEEEALIQALTTRIRAYEGFMDHVEVRKSAAELRAIWVLGNEYLQSAAPWSTFKTDPDKAAMQVRLGLNLIRLYAVLSAPFIPFAADAMLAAMQTENRDWPDDVRAALEALPAGHAFTVPEVLFAKISDESRDEWQDRFKGIRG.

The 'HIGH' region signature appears at 11-21; it reads PYINGIKHLGN. Zn(2+)-binding residues include Cys-143, Cys-146, Cys-156, and Cys-159. The 'KMSKS' region signature appears at 346–350; it reads QFSTS. Thr-349 is a binding site for ATP.

It belongs to the class-I aminoacyl-tRNA synthetase family. MetG type 1 subfamily. Monomer. Zn(2+) serves as cofactor.

The protein resides in the cytoplasm. It catalyses the reaction tRNA(Met) + L-methionine + ATP = L-methionyl-tRNA(Met) + AMP + diphosphate. Functionally, is required not only for elongation of protein synthesis but also for the initiation of all mRNA translation through initiator tRNA(fMet) aminoacylation. In Paracoccus denitrificans (strain Pd 1222), this protein is Methionine--tRNA ligase.